The sequence spans 137 residues: Large ribosomal subunit protein eL28 (137 aa).

Position 2 is an N-acetylserine (Ser2). Residues Lys58 and Lys65 each participate in a glycyl lysine isopeptide (Lys-Gly) (interchain with G-Cter in SUMO2) cross-link. A Phosphoserine modification is found at Ser115.

This sequence belongs to the eukaryotic ribosomal protein eL28 family. In terms of assembly, component of the large ribosomal subunit.

The protein localises to the cytoplasm. Functionally, component of the large ribosomal subunit. The ribosome is a large ribonucleoprotein complex responsible for the synthesis of proteins in the cell. This is Large ribosomal subunit protein eL28 (Rpl28) from Mus musculus (Mouse).